An 87-amino-acid chain; its full sequence is Signal recognition particle 19 kDa protein (87 aa).

The protein belongs to the SRP19 family. As to quaternary structure, part of the signal recognition particle protein translocation system, which is composed of SRP and FtsY. Archaeal SRP consists of a 7S RNA molecule of 300 nucleotides and two protein subunits: SRP54 and SRP19.

Its subcellular location is the cytoplasm. Involved in targeting and insertion of nascent membrane proteins into the cytoplasmic membrane. Binds directly to 7S RNA and mediates binding of the 54 kDa subunit of the SRP. This is Signal recognition particle 19 kDa protein from Methanocaldococcus jannaschii (strain ATCC 43067 / DSM 2661 / JAL-1 / JCM 10045 / NBRC 100440) (Methanococcus jannaschii).